Here is a 231-residue protein sequence, read N- to C-terminus: 7-cyano-7-deazaguanine synthase (231 aa).

8-18 (FSGGQDSTTCL) is a binding site for ATP. Zn(2+) contacts are provided by Cys-188, Cys-197, Cys-200, and Cys-203.

This sequence belongs to the QueC family. It depends on Zn(2+) as a cofactor.

It carries out the reaction 7-carboxy-7-deazaguanine + NH4(+) + ATP = 7-cyano-7-deazaguanine + ADP + phosphate + H2O + H(+). It participates in purine metabolism; 7-cyano-7-deazaguanine biosynthesis. In terms of biological role, catalyzes the ATP-dependent conversion of 7-carboxy-7-deazaguanine (CDG) to 7-cyano-7-deazaguanine (preQ(0)). The polypeptide is 7-cyano-7-deazaguanine synthase (Pectobacterium carotovorum subsp. carotovorum (strain PC1)).